We begin with the raw amino-acid sequence, 320 residues long: Ribosomal large subunit pseudouridine synthase C (320 aa).

Positions 20 to 83 (QRIDNFLLAK…AEREEVQVSA (64 aa)) constitute an S4 RNA-binding domain. Asp144 is an active-site residue.

Belongs to the pseudouridine synthase RluA family.

The enzyme catalyses uridine(955/2504/2580) in 23S rRNA = pseudouridine(955/2504/2580) in 23S rRNA. Functionally, responsible for synthesis of pseudouridine from uracil at positions 955, 2504 and 2580 in 23S ribosomal RNA. This is Ribosomal large subunit pseudouridine synthase C (rluC) from Yersinia pestis.